A 490-amino-acid chain; its full sequence is Asparagine--tRNA ligase (490 aa).

It belongs to the class-II aminoacyl-tRNA synthetase family. Homodimer.

It is found in the cytoplasm. The catalysed reaction is tRNA(Asn) + L-asparagine + ATP = L-asparaginyl-tRNA(Asn) + AMP + diphosphate + H(+). The polypeptide is Asparagine--tRNA ligase (Rhodopirellula baltica (strain DSM 10527 / NCIMB 13988 / SH1)).